A 130-amino-acid polypeptide reads, in one-letter code: Small ribosomal subunit protein uS8 (130 aa).

It belongs to the universal ribosomal protein uS8 family. In terms of assembly, part of the 30S ribosomal subunit. Contacts proteins S5 and S12.

Functionally, one of the primary rRNA binding proteins, it binds directly to 16S rRNA central domain where it helps coordinate assembly of the platform of the 30S subunit. In Haemophilus ducreyi (strain 35000HP / ATCC 700724), this protein is Small ribosomal subunit protein uS8.